The chain runs to 276 residues: tRNA dimethylallyltransferase (276 aa).

An interaction with substrate tRNA region spans residues 9–12 (DSLS).

This sequence belongs to the IPP transferase family. Monomer. Mg(2+) serves as cofactor.

It catalyses the reaction adenosine(37) in tRNA + dimethylallyl diphosphate = N(6)-dimethylallyladenosine(37) in tRNA + diphosphate. Functionally, catalyzes the transfer of a dimethylallyl group onto the adenine at position 37 in tRNAs that read codons beginning with uridine, leading to the formation of N6-(dimethylallyl)adenosine (i(6)A). The sequence is that of tRNA dimethylallyltransferase (miaA) from Helicobacter pylori (strain HPAG1).